A 133-amino-acid chain; its full sequence is Glycophorin-A (133 aa).

O-linked (GalNAc...) threonine glycans are attached at residues Thr1 and Thr6. The disordered stretch occupies residues 1–34; that stretch reads TETPVTGEQGSATPGNVSNATVTAGKPSATSPGV. At 1 to 62 the chain is on the extracellular side; the sequence is TETPVTGEQG…SYHQDFSHAE (62 aa). O-linked (GalNAc...) serine glycosylation occurs at Ser11. Thr13 carries an O-linked (GalNAc...) threonine glycan. Asn19 is a glycosylation site (N-linked (GlcNAc...) asparagine). O-linked (GalNAc...) threonine glycans are attached at residues Thr21, Thr23, and Thr30. Ser31 carries an O-linked (GalNAc...) serine glycan. N-linked (GlcNAc...) asparagine glycosylation is present at Asn39. O-linked (GalNAc...) threonine glycosylation is found at Thr41 and Thr48. Residues 63–85 form a helical membrane-spanning segment; it reads ITGIIFAVMAGLLLIIFLIAYLI. Residues 86-133 are Cytoplasmic-facing; that stretch reads RRMIKKPLPVPKPQDSPDIGTENTADPSELQDTEDPPLTSVEIETPAS. Positions 93 to 133 are disordered; that stretch reads LPVPKPQDSPDIGTENTADPSELQDTEDPPLTSVEIETPAS.

It belongs to the glycophorin-A family. As to quaternary structure, homodimer. Component of the ankyrin-1 complex in the erythrocyte, composed of ANK1, RHCE, RHAG, SLC4A1, EPB42, GYPA, GYPB and AQP1. Interacts with SLC4A1; a GYPA monomer is bound at each end of the SLC4A1 dimer forming a heterotetramer.

Its subcellular location is the membrane. Its function is as follows. Component of the ankyrin-1 complex, a multiprotein complex involved in the stability and shape of the erythrocyte membrane. Glycophorin A is the major intrinsic membrane protein of the erythrocyte. The N-terminal glycosylated segment, which lies outside the erythrocyte membrane, has MN blood group receptors. Appears to be important for the function of SLC4A1 and is required for high activity of SLC4A1. May be involved in translocation of SLC4A1 to the plasma membrane. This chain is Glycophorin-A, found in Sus scrofa (Pig).